We begin with the raw amino-acid sequence, 290 residues long: MASLIDIKQRITSTRKTSQITKAMQMVSAAKLGRAESNARSYEPYVSKIKDVVTHVASTGNSNDHPMLVSRPVHRTGYIVLTSDTGLAGSYNSSVIKEVFQEINKKHTSSDEYAIITVGRSARDFFKARQMNVVLEVQGITDHPIFAEIKDIASNTVQMFEDGVYDEVFIYYNHHINSISSELRKEQLLPLTEFHEKGKEADVDLTTYEFEPSEQEILEVLLPQYVESLIFGALLDAKAAEHAARMTAMRSATDNASDLISDLSLQYNRARQAAITQEITEIVGGAAALE.

This sequence belongs to the ATPase gamma chain family. F-type ATPases have 2 components, CF(1) - the catalytic core - and CF(0) - the membrane proton channel. CF(1) has five subunits: alpha(3), beta(3), gamma(1), delta(1), epsilon(1). CF(0) has three main subunits: a, b and c.

The protein localises to the cell membrane. Functionally, produces ATP from ADP in the presence of a proton gradient across the membrane. The gamma chain is believed to be important in regulating ATPase activity and the flow of protons through the CF(0) complex. The polypeptide is ATP synthase gamma chain (Listeria welshimeri serovar 6b (strain ATCC 35897 / DSM 20650 / CCUG 15529 / CIP 8149 / NCTC 11857 / SLCC 5334 / V8)).